We begin with the raw amino-acid sequence, 587 residues long: Urease subunit alpha (587 aa).

The 439-residue stretch at 134–572 (GGIDTHVHFI…LPLAQRYLYT (439 aa)) folds into the Urease domain. Histidine 139, histidine 141, and lysine 222 together coordinate Ni(2+). Position 222 is an N6-carboxylysine (lysine 222). Histidine 224 provides a ligand contact to substrate. Ni(2+) is bound by residues histidine 251 and histidine 277. Catalysis depends on histidine 325, which acts as the Proton donor. Aspartate 365 is a Ni(2+) binding site.

This sequence belongs to the metallo-dependent hydrolases superfamily. Urease alpha subunit family. In terms of assembly, heterotrimer of UreA (gamma), UreB (beta) and UreC (alpha) subunits. Three heterotrimers associate to form the active enzyme. Ni cation is required as a cofactor. Carboxylation allows a single lysine to coordinate two nickel ions.

It localises to the cytoplasm. It carries out the reaction urea + 2 H2O + H(+) = hydrogencarbonate + 2 NH4(+). It participates in nitrogen metabolism; urea degradation; CO(2) and NH(3) from urea (urease route): step 1/1. The protein is Urease subunit alpha of Clostridium perfringens.